The primary structure comprises 100 residues: Large ribosomal subunit protein mL53 (100 aa).

The protein belongs to the mitochondrion-specific ribosomal protein mL53 family. As to quaternary structure, component of the mitochondrial large ribosomal subunit (mt-LSU). Mature yeast 74S mitochondrial ribosomes consist of a small (37S) and a large (54S) subunit. The 37S small subunit contains a 15S ribosomal RNA (15S mt-rRNA) and at least 32 different proteins. The 54S large subunit contains a 21S rRNA (21S mt-rRNA) and at least 45 different proteins.

Its subcellular location is the mitochondrion. Component of the mitochondrial ribosome (mitoribosome), a dedicated translation machinery responsible for the synthesis of mitochondrial genome-encoded proteins, including at least some of the essential transmembrane subunits of the mitochondrial respiratory chain. The mitoribosomes are attached to the mitochondrial inner membrane and translation products are cotranslationally integrated into the membrane. In Schizosaccharomyces pombe (strain 972 / ATCC 24843) (Fission yeast), this protein is Large ribosomal subunit protein mL53 (mrpl44).